Here is a 355-residue protein sequence, read N- to C-terminus: Syntaxin-5 (355 aa).

At 1–333 the chain is on the cytoplasmic side; it reads MIPRKRYGSK…KYFQSVTSNR (333 aa). An IxM motif; signal for cargo packaging into COPII-coated vesicles motif is present at residues 245 to 247; that stretch reads IDM. One can recognise a t-SNARE coiled-coil homology domain in the interval 263–325; the sequence is DSYIQSRADT…EAAHSEILKY (63 aa). Positions 287-318 form a coiled coil; the sequence is FQQLAHMVKEQEETIQRIDENVLGAQLDVEAA. The chain crosses the membrane as a helical; Anchor for type IV membrane protein span at residues 334–354; the sequence is WLMVKIFLILIVFFIIFVVFL. Residue alanine 355 is a topological domain, vesicular.

The protein belongs to the syntaxin family. In terms of assembly, part of a ternary complex containing STX5A, NSFL1C and VCP. Part of a unique SNARE complex composed of the Golgi SNAREs GOSR1, GOSR2 and YKT6. This complex also includes VTI1A. Component of a SNARE complex consisting of STX5, YKT6, GOSR1 and BET1L. Interacts with BET1L. Interacts with BET1. Interacts with COG4. Interacts with GM130/GOLGA2. Interacts (via IxM motif) with SEC24C and SEC24D; mediates STX5 packaging into COPII-coated vesicles. Interacts with VLDLR; this interaction mediates VLDLR translocation from the endoplasmic reticulum to the plasma membrane. Expressed in the brain, heart, spleen, lung, liver, kidney and testis.

It is found in the endoplasmic reticulum-Golgi intermediate compartment membrane. It localises to the golgi apparatus membrane. Mediates endoplasmic reticulum to Golgi transport. Together with p115/USO1 and GM130/GOLGA2, involved in vesicle tethering and fusion at the cis-Golgi membrane to maintain the stacked and inter-connected structure of the Golgi apparatus. Its function is as follows. Required for Golgi to endoplasmic reticulum retrogade transport, and for intra-Golgi transport. The polypeptide is Syntaxin-5 (Stx5) (Rattus norvegicus (Rat)).